The primary structure comprises 219 residues: Thymidylate kinase (219 aa).

7–14 (GIDGAGKS) contacts ATP.

It belongs to the thymidylate kinase family.

The catalysed reaction is dTMP + ATP = dTDP + ADP. Functionally, phosphorylation of dTMP to form dTDP in both de novo and salvage pathways of dTTP synthesis. The polypeptide is Thymidylate kinase (Chlorobium phaeobacteroides (strain DSM 266 / SMG 266 / 2430)).